The chain runs to 350 residues: Ribosomal RNA large subunit methyltransferase Cfr (350 aa).

Glu92 functions as the Proton acceptor in the catalytic mechanism. A Radical SAM core domain is found at 99–333; the sequence is EAGWESFCIS…VTIRSQFGRE (235 aa). Cysteines 106 and 338 form a disulfide. Cys113, Cys117, and Cys120 together coordinate [4Fe-4S] cluster. Residues 159–160, Ser190, 213–215, and Asn293 each bind S-adenosyl-L-methionine; these read GE and SLH. Catalysis depends on Cys338, which acts as the S-methylcysteine intermediate.

Belongs to the radical SAM superfamily. RlmN family. Cfr subfamily. [4Fe-4S] cluster is required as a cofactor.

The protein resides in the cytoplasm. It carries out the reaction adenosine(2503) in 23S rRNA + 2 reduced [2Fe-2S]-[ferredoxin] + 2 S-adenosyl-L-methionine = 8-methyladenosine(2503) in 23S rRNA + 5'-deoxyadenosine + L-methionine + 2 oxidized [2Fe-2S]-[ferredoxin] + S-adenosyl-L-homocysteine. Functionally, specifically methylates position 8 of adenine 2503 in 23S rRNA. Confers resistance to some classes of antibiotics. This chain is Ribosomal RNA large subunit methyltransferase Cfr, found in Shouchella clausii (strain KSM-K16) (Alkalihalobacillus clausii).